The following is a 100-amino-acid chain: Gas vesicle protein J (100 aa).

Belongs to the gas vesicle GvpA family. As to quaternary structure, interacts with GvpA.

The protein resides in the gas vesicle. A minor component of the gas vesicle, might be involved in nucleating gas vesicle formation. This protein could be important for the shape determination of the gas vesicle. Gas vesicles (GV) are hollow, gas filled proteinaceous nanostructures. During planktonic growth they allow positioning of the organism at a favorable depth for light or nutrient acquisition. In terms of biological role, when a minimal gvp locus (gvpA2-gvpR-gvpN-gvpF-gvpG-gvpL-gvpS-gvpK-gvpJ-gvpT-gvpU, called pNL29) is expressed in E.coli gas vesicles are made. In Priestia megaterium (Bacillus megaterium), this protein is Gas vesicle protein J.